We begin with the raw amino-acid sequence, 495 residues long: Putative aldehyde dehydrogenase AldA (495 aa).

212–218 lines the NAD(+) pocket; the sequence is GKGSESG. Residues glutamate 256 and cysteine 290 contribute to the active site.

The protein belongs to the aldehyde dehydrogenase family.

It catalyses the reaction an aldehyde + NAD(+) + H2O = a carboxylate + NADH + 2 H(+). The protein is Putative aldehyde dehydrogenase AldA (aldA) of Staphylococcus aureus (strain bovine RF122 / ET3-1).